A 440-amino-acid polypeptide reads, in one-letter code: Thymidine phosphorylase (440 aa).

The protein belongs to the thymidine/pyrimidine-nucleoside phosphorylase family. Homodimer.

The catalysed reaction is thymidine + phosphate = 2-deoxy-alpha-D-ribose 1-phosphate + thymine. The protein operates within pyrimidine metabolism; dTMP biosynthesis via salvage pathway; dTMP from thymine: step 1/2. The enzymes which catalyze the reversible phosphorolysis of pyrimidine nucleosides are involved in the degradation of these compounds and in their utilization as carbon and energy sources, or in the rescue of pyrimidine bases for nucleotide synthesis. The chain is Thymidine phosphorylase from Salmonella arizonae (strain ATCC BAA-731 / CDC346-86 / RSK2980).